The chain runs to 1427 residues: METEPDQEHLDQNPCARTVEEELSKSFNLEASLSKFSCLDLDKELEFRSDLIDDKEFDIPQVDTPPTLESILNETDDEDESFVLEDPTLLNVDTIDSHSYDTSSVASSDSGDRANLKRKKKLPDSFSLHGSVMRHSLLKGISAQIVSAADKVDAGLPTAIAVSSLIAVGTSHGLALIFDQNQALRLCLGSTSVGGQYGAISALSINNDCSRLLCGFAKGQITMWDLASGKLLRSITDAHPPGTAILHIKFTDDPTLAICNDSGGSVFELTFKRVMGVRTCESRCLFSGSKGEVCCIEPLHSKPELKDHPITQFSLLAMASLTKILVIGLKPSLKVWMTFPYGRMDPSSVPLLAWHFVAVNNSVNPMLAFCRGDMVHFLLVKRDESGAIHVTKQKHLHLYYDLINFTWINSRTVVLLDSVEKLHVIDRQTQEELETMEISEVQLVYNSSHFKSLATGGNVSQALALVGEKACYQSISSYGGQIFYLGTKSVYVMMLRSWRERMDHLLKQDCLTEALALAWSFHEGKAKAVVGLSGDVSKRKAVVADRMVEILFHYADRALKKCPDQGKIQVMEQHFQDTVPVIVDYCLLLQRKDLLFGQMYDKLSENSVAKGVFLECLEPYILSDKLVGITPQVMKDLIVHFQDKKLLENVEALIVHMDITSLDIQQVVLMCWENRLYDAMVYVYNRGMNEFISPMEKLFKVIAPPLNAGKTLTDEQVVMGNKLLVYISCCLAGRAYPLGDIPEDLVPLVKNQVFEFLIRLHSVEASSEEEVYPYVRTLLHFDTREFLNVLALTFEDFKNDKQAVEYQQRIVDILLKVMVENSDFTPSQVGCLFTFLARQLAKPDNTLFVNRTLFDQVLEFLCSPDDDSRHSERQQVLLELLQAGGIVQFEESRLIRMAEKAEFYQICEFMYEREHQYDKIIDCYLHDPLREEEVFNYIHNILSIPGHSAEEKQSVWQKAMNHMEELVSLKPCKAAELVATHFSEQIEVVIGQLQNQLLLFKFLRSLLDPREGVHVNQELLQIPPHITEQFIELLCQFSPDQVIQTLQVLECYRLEETIQITQKYQLHEVTAYLLEKKGDAHGAFLLLLERLQSRLQEMTRQDENTKEDILLKGVEDTMVETIALCQRNSQNLNQQQREALWFPLLEAMMTPQKLSSSAAAPHPHCEALKSLTMQVLNSMAAFIALPSILQRILQDPIYGKGKLGEIQGLILGMLDTFNYEQTLLETTASLLNQDLHWSLCNLRASVSRGLNPKQDYCSICLQQYKRRQEMADEIIVFSCGHLYHSFCLQSKECTLEVEGQTRWACHKCSSSNKAGKLSENPSENKKGRITSSQVKMSPSYHQSKGDPPARKANSEPVLDPQQMQAFDQLCRLYRGSSRLALLTELSQNRGGDSCRPFAGPQSGPAFNSVFQKENFQLQLAPPPVAED.

Phosphoserine is present on residues Ser26, Ser32, and Ser127. A WD repeat occupies 193–234 (VGGQYGAISALSINNDCSRLLCGFAKGQITMWDLASGKLLRS). The RING-type; atypical zinc finger occupies 1257 to 1309 (CSICLQQYKRRQEMADEIIVFSCGHLYHSFCLQSKECTLEVEGQTRWACHKCS). Residues 1311–1355 (SNKAGKLSENPSENKKGRITSSQVKMSPSYHQSKGDPPARKANSE) form a disordered region. Polar residues predominate over residues 1329-1342 (ITSSQVKMSPSYHQ). Positions 1343 to 1353 (SKGDPPARKAN) are enriched in basic and acidic residues.

This sequence belongs to the VPS8 family. In terms of assembly, interacts with RAB5C. Interacts with TGFBRAP1. Component of the putative class C core vacuole/endosome tethering (CORVET) complex; the core of which is composed of the class C Vps proteins VPS11, VPS16, VPS18 and VPS33A, associated with VPS8 and TGFBRAP1.

Its function is as follows. Plays a role in vesicle-mediated protein trafficking of the endocytic membrane transport pathway. Believed to act as a component of the putative CORVET endosomal tethering complexes which is proposed to be involved in the Rab5-to-Rab7 endosome conversion probably implicating MON1A/B, and via binding SNAREs and SNARE complexes to mediate tethering and docking events during SNARE-mediated membrane fusion. The CORVET complex is proposed to function as a Rab5 effector to mediate early endosome fusion probably in specific endosome subpopulations. Functions predominantly in APPL1-containing endosomes. In Mus musculus (Mouse), this protein is Vacuolar protein sorting-associated protein 8 homolog (Vps8).